Consider the following 340-residue polypeptide: MTVAESTCALVSTQPSIGKPTGGIATYSPAYTIVPTYECFNRCTYCNFRTDPGESSWMSLSAAEDIFKRLQNEQVCEILILSGEVHPNSPKRQVWFQRIYDLCKLALTLGFLPHTNAGPLSFAEMQELKSVNVSMGLMLEQLTPKLLETVHRHAPSKLPELRLQQLEWAGELQIPFTTGLLLGIGETNDDCWETLEAISKLHQRYHHIQEVILQPHSPGNQQTFNAPAFNPHQLPEVIAKARQILPSDITIQIPPNLVKDERWLLACVEAGARDLGGIGPKDEVNPDYPHLQAEELREILQPAGWDLMPRLPVYPQFDGWLSGELQASVRRWRELVIGNW.

The 232-residue stretch at 25-256 (ATYSPAYTIV…SDITIQIPPN (232 aa)) folds into the Radical SAM core domain. [4Fe-4S] cluster contacts are provided by Cys-39, Cys-43, and Cys-46.

Belongs to the radical SAM superfamily. CofG family. In terms of assembly, consists of two subunits, CofG and CofH. [4Fe-4S] cluster serves as cofactor.

It catalyses the reaction 5-amino-5-(4-hydroxybenzyl)-6-(D-ribitylimino)-5,6-dihydrouracil + S-adenosyl-L-methionine = 7,8-didemethyl-8-hydroxy-5-deazariboflavin + 5'-deoxyadenosine + L-methionine + NH4(+) + H(+). Its pathway is cofactor biosynthesis; coenzyme F0 biosynthesis. In terms of biological role, catalyzes the radical-mediated synthesis of 7,8-didemethyl-8-hydroxy-5-deazariboflavin from 5-amino-5-(4-hydroxybenzyl)-6-(D-ribitylimino)-5,6-dihydrouracil. This Trichormus variabilis (strain ATCC 29413 / PCC 7937) (Anabaena variabilis) protein is 7,8-didemethyl-8-hydroxy-5-deazariboflavin synthase.